A 324-amino-acid chain; its full sequence is Calmodulin-like protein 12 (324 aa).

6 consecutive EF-hand domains span residues 8–43 (DQIT…IGEK), 44–79 (PTKA…NQGH), 97–132 (DQIT…LGKN), 133–168 (RTKA…NQGH), 187–222 (DQIL…LGET), and 223–258 (QTKA…KMID). Positions 21, 23, 25, 27, 32, 57, 59, 61, 63, 68, 110, 112, 114, 116, 121, 146, 148, 150, 152, 157, 200, 202, 204, 206, 211, 236, 238, 240, 242, and 247 each coordinate Ca(2+).

This sequence belongs to the calmodulin family. As to quaternary structure, interacts with PID. Binds to ABCG36.

Its function is as follows. Potential calcium sensor that binds calcium in vitro. This chain is Calmodulin-like protein 12, found in Arabidopsis thaliana (Mouse-ear cress).